The chain runs to 233 residues: Ribosome-recycling factor, mitochondrial (233 aa).

Belongs to the RRF family.

Its subcellular location is the mitochondrion. In terms of biological role, necessary for protein synthesis in mitochondria. Functions as a ribosome recycling factor in mitochondria. The polypeptide is Ribosome-recycling factor, mitochondrial (RRF1) (Candida glabrata (strain ATCC 2001 / BCRC 20586 / JCM 3761 / NBRC 0622 / NRRL Y-65 / CBS 138) (Yeast)).